The chain runs to 188 residues: PRA1 family protein F4 (188 aa).

Residues 1–13 (MANNDEITTSSHA) are compositionally biased toward polar residues. The disordered stretch occupies residues 1–25 (MANNDEITTSSHASPAVNHESISRA). A run of 4 helical transmembrane segments spans residues 67–86 (YFRS…SLIW), 90–107 (SLIV…LYFL), 119–139 (IDDR…LLLT), and 142–162 (TFNI…HAVI).

This sequence belongs to the PRA1 family.

The protein localises to the endosome membrane. Functionally, may be involved in both secretory and endocytic intracellular trafficking in the endosomal/prevacuolar compartments. The polypeptide is PRA1 family protein F4 (PRA1F4) (Arabidopsis thaliana (Mouse-ear cress)).